Here is a 159-residue protein sequence, read N- to C-terminus: Small ribosomal subunit protein uS19 (159 aa).

This sequence belongs to the universal ribosomal protein uS19 family.

Protein S19 forms a complex with S13 that binds strongly to the 16S ribosomal RNA. The polypeptide is Small ribosomal subunit protein uS19 (Pyrobaculum arsenaticum (strain DSM 13514 / JCM 11321 / PZ6)).